The following is a 207-amino-acid chain: Ribosome maturation factor RimM (207 aa).

The region spanning 114–207 is the PRC barrel domain; that stretch reads DDEYYWVDLI…RIDSDWPLDY (94 aa).

Belongs to the RimM family. As to quaternary structure, binds ribosomal protein uS19.

It is found in the cytoplasm. An accessory protein needed during the final step in the assembly of 30S ribosomal subunit, possibly for assembly of the head region. Essential for efficient processing of 16S rRNA. May be needed both before and after RbfA during the maturation of 16S rRNA. It has affinity for free ribosomal 30S subunits but not for 70S ribosomes. The chain is Ribosome maturation factor RimM from Bordetella pertussis (strain Tohama I / ATCC BAA-589 / NCTC 13251).